The sequence spans 186 residues: MGIDHTSKQHKRSGHRTAPKSDNVYLKLLVKLYTFLARRTDAPFNKVVLKALFLSKINRPPVSVSRIARALKQEGAANKTVVVVGTVTDDARIFEFPKTTVAALRFTAGARAKIVKAGGECITLDQLAVRAPKGQNTLILRGPRNSREAVRHFGMGPHKGKAPRILSTGRKFERARGRRRSKGFKV.

An N6,N6,N6-trimethyllysine modification is found at Lys-50. Lys-116 participates in a covalent cross-link: Glycyl lysine isopeptide (Lys-Gly) (interchain with G-Cter in ubiquitin).

Belongs to the eukaryotic ribosomal protein eL18 family. As to quaternary structure, component of the large ribosomal subunit (LSU). Mature yeast ribosomes consist of a small (40S) and a large (60S) subunit. The 40S small subunit contains 1 molecule of ribosomal RNA (18S rRNA) and 33 different proteins (encoded by 57 genes). The large 60S subunit contains 3 rRNA molecules (25S, 5.8S and 5S rRNA) and 46 different proteins (encoded by 81 genes). eL18 interacts with NAP1.

It localises to the cytoplasm. Component of the ribosome, a large ribonucleoprotein complex responsible for the synthesis of proteins in the cell. The small ribosomal subunit (SSU) binds messenger RNAs (mRNAs) and translates the encoded message by selecting cognate aminoacyl-transfer RNA (tRNA) molecules. The large subunit (LSU) contains the ribosomal catalytic site termed the peptidyl transferase center (PTC), which catalyzes the formation of peptide bonds, thereby polymerizing the amino acids delivered by tRNAs into a polypeptide chain. The nascent polypeptides leave the ribosome through a tunnel in the LSU and interact with protein factors that function in enzymatic processing, targeting, and the membrane insertion of nascent chains at the exit of the ribosomal tunnel. The sequence is that of Large ribosomal subunit protein eL18B from Saccharomyces cerevisiae (strain ATCC 204508 / S288c) (Baker's yeast).